The chain runs to 107 residues: MQLYTYLYLLVSLVTFYLILGTGTLGHGGALTERRSTDATALKPEPVLLQKSSARSTDDNGNDRLTQMKRILKKRGNKARGEEEVAKMAAELARENIAKGCKVNCYP.

Residues 1-24 (MQLYTYLYLLVSLVTFYLILGTGT) form the signal peptide. Residues 25–80 (LGHGGALTERRSTDATALKPEPVLLQKSSARSTDDNGNDRLTQMKRILKKRGNKAR) constitute a propeptide that is removed on maturation. Residues 26-64 (GHGGALTERRSTDATALKPEPVLLQKSSARSTDDNGNDR) form a disordered region. 4 positions are modified to 4-carboxyglutamate: Glu-83, Glu-84, Glu-91, and Glu-95. Positions 91 and 95 each coordinate a divalent metal cation. The cysteines at positions 101 and 105 are disulfide-linked.

Belongs to the conotoxin B superfamily. It depends on Ca(2+) as a cofactor. Mg(2+) is required as a cofactor. In terms of tissue distribution, expressed by the venom duct.

The protein localises to the secreted. In terms of biological role, conantokins inhibit N-methyl-D-aspartate (NMDA) receptors. This toxin is potent in the following order of preference: NR2B approximately NR2A/GRIN2A &gt; NR2C/GRIN2C &gt;&gt; NR2D/GRIN2D. Induces sleep-like symptoms in young mice. Is a highly potent anticonvulsant compound. The sequence is that of Conantokin-R from Conus radiatus (Rayed cone).